The sequence spans 300 residues: Probable endonuclease 4 (300 aa).

Residues histidine 68, histidine 109, glutamate 144, aspartate 178, histidine 181, histidine 213, aspartate 226, histidine 228, and glutamate 258 each coordinate Zn(2+).

Belongs to the AP endonuclease 2 family. Requires Zn(2+) as cofactor.

The catalysed reaction is Endonucleolytic cleavage to 5'-phosphooligonucleotide end-products.. Functionally, endonuclease IV plays a role in DNA repair. It cleaves phosphodiester bonds at apurinic or apyrimidinic (AP) sites, generating a 3'-hydroxyl group and a 5'-terminal sugar phosphate. In Latilactobacillus sakei subsp. sakei (strain 23K) (Lactobacillus sakei subsp. sakei), this protein is Probable endonuclease 4.